Here is a 340-residue protein sequence, read N- to C-terminus: Phosphate acyltransferase (340 aa).

It belongs to the PlsX family. In terms of assembly, homodimer. Probably interacts with PlsY.

The protein resides in the cytoplasm. It carries out the reaction a fatty acyl-[ACP] + phosphate = an acyl phosphate + holo-[ACP]. The protein operates within lipid metabolism; phospholipid metabolism. Catalyzes the reversible formation of acyl-phosphate (acyl-PO(4)) from acyl-[acyl-carrier-protein] (acyl-ACP). This enzyme utilizes acyl-ACP as fatty acyl donor, but not acyl-CoA. This Nitrosococcus oceani (strain ATCC 19707 / BCRC 17464 / JCM 30415 / NCIMB 11848 / C-107) protein is Phosphate acyltransferase.